A 217-amino-acid chain; its full sequence is IMPACT family member YvyE (217 aa).

This sequence belongs to the IMPACT family.

The polypeptide is IMPACT family member YvyE (yvyE) (Bacillus subtilis (strain 168)).